A 455-amino-acid polypeptide reads, in one-letter code: Bifunctional protein GlmU (455 aa).

The pyrophosphorylase stretch occupies residues 1–225 (MNIVILAAGM…EWETLGVNSK (225 aa)). Residues 6-9 (LAAG), lysine 20, glutamine 71, 76-77 (GT), 98-100 (YGD), glycine 135, glutamate 150, asparagine 165, and asparagine 223 contribute to the UDP-N-acetyl-alpha-D-glucosamine site. Residue aspartate 100 coordinates Mg(2+). Mg(2+) is bound at residue asparagine 223. The linker stretch occupies residues 226-246 (VQLAELERIHQRNLAQQLLED). The N-acetyltransferase stretch occupies residues 247–455 (GVTLIDPARI…QRPVKQKKEG (209 aa)). UDP-N-acetyl-alpha-D-glucosamine-binding residues include arginine 329 and lysine 347. Histidine 359 (proton acceptor) is an active-site residue. The UDP-N-acetyl-alpha-D-glucosamine site is built by tyrosine 362 and asparagine 373. Residues alanine 376, 382 to 383 (NY), serine 401, alanine 419, and arginine 436 each bind acetyl-CoA.

In the N-terminal section; belongs to the N-acetylglucosamine-1-phosphate uridyltransferase family. This sequence in the C-terminal section; belongs to the transferase hexapeptide repeat family. In terms of assembly, homotrimer. Mg(2+) is required as a cofactor.

Its subcellular location is the cytoplasm. It carries out the reaction alpha-D-glucosamine 1-phosphate + acetyl-CoA = N-acetyl-alpha-D-glucosamine 1-phosphate + CoA + H(+). The enzyme catalyses N-acetyl-alpha-D-glucosamine 1-phosphate + UTP + H(+) = UDP-N-acetyl-alpha-D-glucosamine + diphosphate. The protein operates within nucleotide-sugar biosynthesis; UDP-N-acetyl-alpha-D-glucosamine biosynthesis; N-acetyl-alpha-D-glucosamine 1-phosphate from alpha-D-glucosamine 6-phosphate (route II): step 2/2. It functions in the pathway nucleotide-sugar biosynthesis; UDP-N-acetyl-alpha-D-glucosamine biosynthesis; UDP-N-acetyl-alpha-D-glucosamine from N-acetyl-alpha-D-glucosamine 1-phosphate: step 1/1. Its pathway is bacterial outer membrane biogenesis; LPS lipid A biosynthesis. Functionally, catalyzes the last two sequential reactions in the de novo biosynthetic pathway for UDP-N-acetylglucosamine (UDP-GlcNAc). The C-terminal domain catalyzes the transfer of acetyl group from acetyl coenzyme A to glucosamine-1-phosphate (GlcN-1-P) to produce N-acetylglucosamine-1-phosphate (GlcNAc-1-P), which is converted into UDP-GlcNAc by the transfer of uridine 5-monophosphate (from uridine 5-triphosphate), a reaction catalyzed by the N-terminal domain. This Ralstonia pickettii (strain 12J) protein is Bifunctional protein GlmU.